Reading from the N-terminus, the 348-residue chain is MKMTFRWYGKDDPISLEYIKQIPGMKGIVSAIYDVPVGEVWPLDKIKALKQEIEDAGMELSVIESVPVHEDIKLGKPTRDKYIENYCETLRNLGQAGIKIVCYNFMPVFDWTRSQLDYRLDDGSTCLIYDEQDVEKMNPLSGELSLPGWDSSYTKEDLKQLFDDYKEVDEETLWDNLNYFIQKVIPVAEEEDVLMAIHPDDPPWNIFGLPRIITNKENLERFINLYDSKYNGLTMCSGSLGADRRNDFVDMLRYFGEKGRVNFVHARNVKLIGDKSFQESAHLSEKGSIDMYEVVKTLHSFDYHGPIRPDHGRMIWGETGKPGYGLYDRALGATYLNGLYEAVSKNNK.

This sequence belongs to the mannonate dehydratase family. Requires Fe(2+) as cofactor. The cofactor is Mn(2+).

The enzyme catalyses D-mannonate = 2-dehydro-3-deoxy-D-gluconate + H2O. Its pathway is carbohydrate metabolism; pentose and glucuronate interconversion. Catalyzes the dehydration of D-mannonate. The polypeptide is Mannonate dehydratase (Staphylococcus haemolyticus (strain JCSC1435)).